Consider the following 181-residue polypeptide: NADH-quinone oxidoreductase subunit B (181 aa).

Residues C60, C61, C125, and C155 each contribute to the [4Fe-4S] cluster site.

Belongs to the complex I 20 kDa subunit family. NDH-1 is composed of 14 different subunits. Subunits NuoB, C, D, E, F, and G constitute the peripheral sector of the complex. [4Fe-4S] cluster is required as a cofactor.

The protein resides in the cell inner membrane. It catalyses the reaction a quinone + NADH + 5 H(+)(in) = a quinol + NAD(+) + 4 H(+)(out). NDH-1 shuttles electrons from NADH, via FMN and iron-sulfur (Fe-S) centers, to quinones in the respiratory chain. Couples the redox reaction to proton translocation (for every two electrons transferred, four hydrogen ions are translocated across the cytoplasmic membrane), and thus conserves the redox energy in a proton gradient. The sequence is that of NADH-quinone oxidoreductase subunit B from Novosphingobium aromaticivorans (strain ATCC 700278 / DSM 12444 / CCUG 56034 / CIP 105152 / NBRC 16084 / F199).